The sequence spans 321 residues: tRNA U34 carboxymethyltransferase (321 aa).

Residues Lys90, Trp104, Lys109, Gly129, 151-153 (DPT), 180-181 (IE), Met195, Tyr199, and Arg314 contribute to the carboxy-S-adenosyl-L-methionine site.

The protein belongs to the class I-like SAM-binding methyltransferase superfamily. CmoB family. In terms of assembly, homotetramer.

It carries out the reaction carboxy-S-adenosyl-L-methionine + 5-hydroxyuridine(34) in tRNA = 5-carboxymethoxyuridine(34) in tRNA + S-adenosyl-L-homocysteine + H(+). Catalyzes carboxymethyl transfer from carboxy-S-adenosyl-L-methionine (Cx-SAM) to 5-hydroxyuridine (ho5U) to form 5-carboxymethoxyuridine (cmo5U) at position 34 in tRNAs. The sequence is that of tRNA U34 carboxymethyltransferase from Haemophilus influenzae (strain PittEE).